A 77-amino-acid polypeptide reads, in one-letter code: Conotoxin VnMEKL-0223 (77 aa).

A signal peptide spans methionine 1–alanine 19. Residues leucine 20–serine 37 constitute a propeptide that is removed on maturation. 3 disulfides stabilise this stretch: cysteine 51–cysteine 65, cysteine 58–cysteine 69, and cysteine 64–cysteine 74.

Belongs to the conotoxin O2 superfamily. As to expression, expressed by the venom duct.

It localises to the secreted. This is Conotoxin VnMEKL-0223 from Conus ventricosus (Mediterranean cone).